We begin with the raw amino-acid sequence, 821 residues long: Kinetochore protein SLK19 (821 aa).

Disordered stretches follow at residues 1 to 52 (MNEV…SQFV) and 99 to 153 (FDDK…NDKE). Position 7 is a phosphothreonine; by CDC28 (threonine 7). A compositionally biased stretch (polar residues) spans 15–51 (QAQQREQNSENCSQERNPRTFNSEPDSSFNSPGSSQF). 2 stretches are compositionally biased toward basic and acidic residues: residues 99 to 122 (FDDKKSDSGTNDDKGGASTSDKHV) and 136 to 153 (SSEKRSDKNVDVDENDKE). 2 positions are modified to phosphoserine: serine 188 and serine 189. Serine 201 carries the post-translational modification Phosphoserine; by CDC28. The residue at position 216 (serine 216) is a Phosphoserine. Residue threonine 273 is modified to Phosphothreonine. Disordered stretches follow at residues 274–298 (PLYETSARESNSNEEGRNDYDDDNQ) and 699–720 (EQNNNNNNSVTLSNDQKDRDDE). A Phosphoserine modification is found at serine 283. Positions 310-821 (AKRNEELTDQ…LLKLLENEKK (512 aa)) form a coiled coil.

Post-translationally, cleaved by ESP1 at the onset of anaphase. Phosphorylated by CDC5/Polo-like kinase at the onset of anaphase. Phosphorylation takes places at proximity to cleavage sites and is required for an efficient cleavage by ESP1. Phosphorylated also by CDC28.

It is found in the chromosome. The protein localises to the centromere. Its subcellular location is the kinetochore. It localises to the cytoplasm. The protein resides in the cytoskeleton. It is found in the microtubule organizing center. The protein localises to the spindle pole body. In terms of biological role, has a role in spindle assembly and stability. Required to ensure a timely exit form mitosis. Essential to maintain pre-anaphase spindle polarity. Associates to the plus ends of the microtubules at the kinetochore and spindle midzone. A component of the FEAR (CDC14 Early Anaphase Release) network which promotes CDC14 release from the nucleolus during early anaphase. Required for proper chromosome segregation during meiosis I where it prevents premature sister chromatid separation. This Saccharomyces cerevisiae (strain ATCC 204508 / S288c) (Baker's yeast) protein is Kinetochore protein SLK19 (SLK19).